The primary structure comprises 841 residues: Alpha-glucan phosphorylase 2, cytosolic (841 aa).

Positions 1-24 (MANANGKAATSLPEKISAKANPEA) are disordered. Lys687 carries the post-translational modification N6-(pyridoxal phosphate)lysine.

This sequence belongs to the glycogen phosphorylase family. It depends on pyridoxal 5'-phosphate as a cofactor.

It is found in the cytoplasm. It catalyses the reaction [(1-&gt;4)-alpha-D-glucosyl](n) + phosphate = [(1-&gt;4)-alpha-D-glucosyl](n-1) + alpha-D-glucose 1-phosphate. In terms of biological role, phosphorylase is an important allosteric enzyme in carbohydrate metabolism. Enzymes from different sources differ in their regulatory mechanisms and in their natural substrates. However, all known phosphorylases share catalytic and structural properties. In Arabidopsis thaliana (Mouse-ear cress), this protein is Alpha-glucan phosphorylase 2, cytosolic (PHS2).